The following is a 293-amino-acid chain: Phosphatidylglycerol--prolipoprotein diacylglyceryl transferase (293 aa).

The next 4 helical transmembrane spans lie at 45–65 (FELR…YFVA), 81–101 (ELIF…YVLF), 115–135 (IWEG…TGFL), and 144–164 (FTFL…QAIG). Arginine 165 lines the a 1,2-diacyl-sn-glycero-3-phospho-(1'-sn-glycerol) pocket. 3 helical membrane-spanning segments follow: residues 204–224 (PTFL…SVYF), 231–249 (HGEV…RIVI), and 262–282 (IKAA…GFLI).

It belongs to the Lgt family.

The protein localises to the cell inner membrane. The catalysed reaction is L-cysteinyl-[prolipoprotein] + a 1,2-diacyl-sn-glycero-3-phospho-(1'-sn-glycerol) = an S-1,2-diacyl-sn-glyceryl-L-cysteinyl-[prolipoprotein] + sn-glycerol 1-phosphate + H(+). Its pathway is protein modification; lipoprotein biosynthesis (diacylglyceryl transfer). Catalyzes the transfer of the diacylglyceryl group from phosphatidylglycerol to the sulfhydryl group of the N-terminal cysteine of a prolipoprotein, the first step in the formation of mature lipoproteins. This is Phosphatidylglycerol--prolipoprotein diacylglyceryl transferase from Thermotoga maritima (strain ATCC 43589 / DSM 3109 / JCM 10099 / NBRC 100826 / MSB8).